A 393-amino-acid polypeptide reads, in one-letter code: STE20-related kinase adapter protein alpha (393 aa).

Phosphoserine occurs at positions 2 and 9. Positions tyrosine 32 to phenylalanine 341 constitute a Protein kinase domain. A Phosphothreonine; by LKB1 modification is found at threonine 381.

It belongs to the protein kinase superfamily. STE Ser/Thr protein kinase family. STE20 subfamily. Component of a trimeric complex composed of STK11/LKB1, STRAD (STRADA or STRADB) and CAB39/MO25 (CAB39/MO25alpha or CAB39L/MO25beta): the complex tethers STK11/LKB1 in the cytoplasm and stimulates its catalytic activity. Expressed in liver.

It is found in the nucleus. The protein localises to the cytoplasm. In terms of biological role, pseudokinase which, in complex with CAB39/MO25 (CAB39/MO25alpha or CAB39L/MO25beta), binds to and activates STK11/LKB1. Adopts a closed conformation typical of active protein kinases and binds STK11/LKB1 as a pseudosubstrate, promoting conformational change of STK11/LKB1 in an active conformation. The polypeptide is STE20-related kinase adapter protein alpha (Strada) (Rattus norvegicus (Rat)).